A 318-amino-acid polypeptide reads, in one-letter code: Ribosomal RNA small subunit methyltransferase H (318 aa).

S-adenosyl-L-methionine-binding positions include 35–37, Asp54, Phe83, Asp104, and Gln111; that span reads GGH.

The protein belongs to the methyltransferase superfamily. RsmH family.

The protein resides in the cytoplasm. The catalysed reaction is cytidine(1402) in 16S rRNA + S-adenosyl-L-methionine = N(4)-methylcytidine(1402) in 16S rRNA + S-adenosyl-L-homocysteine + H(+). Its function is as follows. Specifically methylates the N4 position of cytidine in position 1402 (C1402) of 16S rRNA. This Latilactobacillus sakei subsp. sakei (strain 23K) (Lactobacillus sakei subsp. sakei) protein is Ribosomal RNA small subunit methyltransferase H.